A 1096-amino-acid chain; its full sequence is Inactive phospholipase C-like protein 1 (1096 aa).

Positions 1-101 are disordered; sequence MAEGAASREA…KKTVSFSSMP (101 aa). Residues 26–41 show a composition bias toward low complexity; that stretch reads GADAASGDAAPEASGG. A phosphoserine mark is found at Ser-48 and Ser-78. The interval 83-222 is interaction with PPP1C; it reads PSNQKCGGRK…NIWVSGLRYL (140 aa). Thr-94 carries the phosphothreonine modification. Ser-96 carries the phosphoserine modification. Residues 114–224 enclose the PH domain; it reads SFMQAGCELK…WVSGLRYLVS (111 aa). Residues 399–543 enclose the PI-PLC X-box domain; the sequence is QDMTQPLSHY…LKHMIIVKGK (145 aa). The interaction with GABA A beta subunit stretch occupies residues 544 to 568; that stretch reads KLPSESDLLEGEVTDEDEEAEMSRR. Phosphothreonine is present on Thr-557. Phosphoserine is present on Ser-570. The PI-PLC Y-box domain maps to 586 to 702; it reads LSDLVSICKS…GYVLRPSIMR (117 aa). The C2 domain occupies 702 to 831; sequence RDEVSYFSAN…PGYRHVPLRS (130 aa). A coiled-coil region spans residues 1040 to 1060; that stretch reads DLLKNAKNEAVENIKQIQLAC. Positions 1067–1096 are disordered; sequence KGPGSAAEAKGKRSLEAIEEKESSEENGKL. A compositionally biased stretch (basic and acidic residues) spans 1075–1096; that stretch reads AKGKRSLEAIEEKESSEENGKL. Ser-1080 is modified (phosphoserine).

Belongs to the PRIP family. As to quaternary structure, interacts with PPP2CA, GABA receptor beta subunits, GABA receptor gamma-2 subunits. Interacts with Ins(1,4,5)P3, Ins(1,4,5,6)P4, GABARAP, and PPP1C. May form a ternary complex with GABA receptor beta subunit and GABARAP. The formation of a ternary complex with GABA receptor beta subunit and GABARAP could be the key step for facilitating the association of GABARAP with the GABA receptor gamma-2 subunit and to allow it to be transported at the right destination. Phosphorylation of Thr-94 resulted in dissociation of PPP1C from PRIP1. In vitro, phosphorylated by the catalytic subunit of PKA. In terms of tissue distribution, expressed in brain. Found in the granular cell and Purkinje cell layers in the cerebellum; and in the hippocampal pyramidal cells, dentate granule cells and pyramidal granule cells of the cerebral cortex in the cerebrum.

It localises to the cytoplasm. Involved in an inositol phospholipid-based intracellular signaling cascade. Shows no PLC activity to phosphatidylinositol 4,5-bisphosphate and phosphatidylinositol. Component in the phospho-dependent endocytosis process of GABA A receptor. Acts as an inhibitor of PPP1C. The chain is Inactive phospholipase C-like protein 1 (Plcl1) from Rattus norvegicus (Rat).